A 265-amino-acid polypeptide reads, in one-letter code: Undecaprenyl-diphosphatase (265 aa).

7 helical membrane passes run Glu-42–Phe-62, Ile-90–Phe-110, Val-115–Ile-135, Val-160–Leu-182, Phe-195–Val-215, Ile-222–Val-242, and Lys-245–Leu-265.

This sequence belongs to the UppP family.

It localises to the cell membrane. The enzyme catalyses di-trans,octa-cis-undecaprenyl diphosphate + H2O = di-trans,octa-cis-undecaprenyl phosphate + phosphate + H(+). Catalyzes the dephosphorylation of undecaprenyl diphosphate (UPP). The chain is Undecaprenyl-diphosphatase from Methanococcoides burtonii (strain DSM 6242 / NBRC 107633 / OCM 468 / ACE-M).